Here is a 548-residue protein sequence, read N- to C-terminus: MNHHEVHAVSAFAMSGFEQSLVFAIDGGGDFLSGLMAVGSGTVIAQLVSFPEHNSLGLFYLETIRYLGCGMFDEYKVMGLAPYGDPDRYRELFAQFYELLDSGGYRVHLDRIGPALLRNIQVRRKGMPFTQQHRDVSASLQEALERIVFHTLRHHRKATGMTRLCLAGGVAHNCTLNGKLLYSGLFDDIFVQPAAHDAGCALGAALMVSSELGRPAPRERLPDVYWGPDLGNEQATELELNAWSGHLDIQRSDDIASSAADWMANGAVIGWVQGRSEFGPRALGNRSILADPRPAENKDRINAVVKKRESYRPFAPSALEEDASEFFELPDGTRQLPFMNFVVRVREAKGNVLGAITHVDGTARLQTVSRKTNPAYWDVINAFKKRTSLPILLNTSFNNNAEPIVQSVSDAITTFLTTDLDGLVVGPFLVRKRPASLQDWSALAASLPPYASLHRVRSHIAPDRQETVCEIRMGHSAHSSMRISPELFEILMRIEGEASLGSLFDTALLDQAKREDLVKELRLVWELRGVRLHPLHAACRHDNVQSGT.

The protein belongs to the NodU/CmcH family.

Functionally, involved in 6-O-carbamoylation of Nod-factors. The polypeptide is Nodulation protein NolO (nolO) (Bradyrhizobium diazoefficiens (strain JCM 10833 / BCRC 13528 / IAM 13628 / NBRC 14792 / USDA 110)).